Here is a 291-residue protein sequence, read N- to C-terminus: Malectin (291 aa).

Residues 1–30 form the signal peptide; it reads MLRPRGAEGTAVALLRLLLLLLLLGPKLRG. The Lumenal portion of the chain corresponds to 31-268; it reads PGLGVVGAAG…TPNPYASDNS (238 aa). The a carbohydrate site is built by tyrosine 81, tyrosine 103, tyrosine 130, phenylalanine 131, and aspartate 200. Residues 220–264 are disordered; that stretch reads LQPHPGLEKKEEEEEEEEYDEGSNLKRQTNKNRVQSGPRTPNPYA. Residues 230 to 240 show a composition bias toward acidic residues; the sequence is EEEEEEEEYDE. Residues 244-264 are compositionally biased toward polar residues; sequence LKRQTNKNRVQSGPRTPNPYA. Asparagine 267 carries N-linked (GlcNAc...) asparagine glycosylation. Residues 269-289 traverse the membrane as a helical segment; that stretch reads SLMFPILVAFGVFIPTLFCLC. The Cytoplasmic portion of the chain corresponds to 290 to 291; sequence RL.

This sequence belongs to the malectin family. As to quaternary structure, interacts with the oligosaccharyltransferase (OST) complex.

Its subcellular location is the endoplasmic reticulum membrane. Functionally, carbohydrate-binding protein with a strong ligand preference for Glc2-N-glycan. May play a role in the early steps of protein N-glycosylation. This chain is Malectin, found in Mus musculus (Mouse).